Here is a 159-residue protein sequence, read N- to C-terminus: Transcriptional repressor NrdR (159 aa).

A zinc finger lies at 3 to 34 (CPFCRHDDTQVVDSRVSEDGAAIRRRRRCSAC). The region spanning 49–139 (PAVVKKDGSR…VYRRFEDVSE (91 aa)) is the ATP-cone domain.

Belongs to the NrdR family. Requires Zn(2+) as cofactor.

In terms of biological role, negatively regulates transcription of bacterial ribonucleotide reductase nrd genes and operons by binding to NrdR-boxes. The sequence is that of Transcriptional repressor NrdR from Burkholderia pseudomallei (strain 1106a).